The chain runs to 494 residues: Glutamyl-tRNA(Gln) amidotransferase subunit A (494 aa).

Residues Lys79 and Ser159 each act as charge relay system in the active site. Residue Ser183 is the Acyl-ester intermediate of the active site.

The protein belongs to the amidase family. GatA subfamily. In terms of assembly, heterotrimer of A, B and C subunits.

It carries out the reaction L-glutamyl-tRNA(Gln) + L-glutamine + ATP + H2O = L-glutaminyl-tRNA(Gln) + L-glutamate + ADP + phosphate + H(+). Allows the formation of correctly charged Gln-tRNA(Gln) through the transamidation of misacylated Glu-tRNA(Gln) in organisms which lack glutaminyl-tRNA synthetase. The reaction takes place in the presence of glutamine and ATP through an activated gamma-phospho-Glu-tRNA(Gln). This Bartonella bacilliformis (strain ATCC 35685 / KC583 / Herrer 020/F12,63) protein is Glutamyl-tRNA(Gln) amidotransferase subunit A.